Here is a 507-residue protein sequence, read N- to C-terminus: Cytochrome P450 71D2 (507 aa).

2 consecutive transmembrane segments (helical) span residues 6 to 26 (LPFN…LIYG) and 447 to 467 (ICPG…LLLY). Residue C448 coordinates heme.

This sequence belongs to the cytochrome P450 family.

It is found in the membrane. The protein is Cytochrome P450 71D2 of Catharanthus roseus (Madagascar periwinkle).